The chain runs to 356 residues: Protein RecA (356 aa).

69–76 (GPESSGKT) is an ATP binding site.

The protein belongs to the RecA family.

The protein localises to the cytoplasm. Its function is as follows. Can catalyze the hydrolysis of ATP in the presence of single-stranded DNA, the ATP-dependent uptake of single-stranded DNA by duplex DNA, and the ATP-dependent hybridization of homologous single-stranded DNAs. It interacts with LexA causing its activation and leading to its autocatalytic cleavage. This Gloeothece citriformis (strain PCC 7424) (Cyanothece sp. (strain PCC 7424)) protein is Protein RecA.